Reading from the N-terminus, the 265-residue chain is Tryptophan synthase alpha chain (265 aa).

Catalysis depends on proton acceptor residues Glu48 and Asp59.

The protein belongs to the TrpA family. Tetramer of two alpha and two beta chains.

It carries out the reaction (1S,2R)-1-C-(indol-3-yl)glycerol 3-phosphate + L-serine = D-glyceraldehyde 3-phosphate + L-tryptophan + H2O. The protein operates within amino-acid biosynthesis; L-tryptophan biosynthesis; L-tryptophan from chorismate: step 5/5. The alpha subunit is responsible for the aldol cleavage of indoleglycerol phosphate to indole and glyceraldehyde 3-phosphate. This Ruthia magnifica subsp. Calyptogena magnifica protein is Tryptophan synthase alpha chain.